A 206-amino-acid chain; its full sequence is Small ribosomal subunit protein uS4 (206 aa).

The tract at residues 15 to 46 (MGENIWGRPKSPVNKREYGPGQHGQRRKNKLS) is disordered. Positions 94 to 157 (RRLDAIVYRA…RQLAIVLEAT (64 aa)) constitute an S4 RNA-binding domain.

This sequence belongs to the universal ribosomal protein uS4 family. In terms of assembly, part of the 30S ribosomal subunit. Contacts protein S5. The interaction surface between S4 and S5 is involved in control of translational fidelity.

Its function is as follows. One of the primary rRNA binding proteins, it binds directly to 16S rRNA where it nucleates assembly of the body of the 30S subunit. Functionally, with S5 and S12 plays an important role in translational accuracy. This Cereibacter sphaeroides (strain ATCC 17025 / ATH 2.4.3) (Rhodobacter sphaeroides) protein is Small ribosomal subunit protein uS4.